Here is a 257-residue protein sequence, read N- to C-terminus: Probable enoyl-CoA hydratase echA17 (257 aa).

This sequence belongs to the enoyl-CoA hydratase/isomerase family.

The enzyme catalyses a (3S)-3-hydroxyacyl-CoA = a (2E)-enoyl-CoA + H2O. It carries out the reaction a 4-saturated-(3S)-3-hydroxyacyl-CoA = a (3E)-enoyl-CoA + H2O. Functionally, could possibly oxidize fatty acids using specific components. This is Probable enoyl-CoA hydratase echA17 (echA17) from Mycolicibacterium paratuberculosis (strain ATCC BAA-968 / K-10) (Mycobacterium paratuberculosis).